We begin with the raw amino-acid sequence, 588 residues long: Cyclomaltodextrinase (588 aa).

Histidine 247 and arginine 326 together coordinate substrate. The active-site Nucleophile is the aspartate 328. Glutamate 357 functions as the Proton donor in the catalytic mechanism. Substrate is bound by residues 423–424, aspartate 468, and arginine 472; that span reads HD.

This sequence belongs to the glycosyl hydrolase 13 family. As to quaternary structure, exists as a monomer or a homodimer in solution. Homodimer is more active and stable than the monomer.

It carries out the reaction cyclomaltodextrin + H2O = linear maltodextrin. With respect to regulation, no metal dependence, but Mn(2+) increases the activity with alpha-cyclodextrin as substrate. No effect on the activity with presence or absence of Ca(2+), Zn(2+), Tween-20 or EDTA. Functionally, hydrolyzes alpha-, beta- and gamma-cyclodextrins with the highest activity with alpha-cyclodextrin (cyclomaltohexaose). Pullulan is the preferred substrate from linear substrates. Maltose is a major product of these reactions. Is also able to hydrolyze maltotriose and acarbose, and transglycosylate their hydrolytic products. Major reaction products of maltotriose and of acarbose are maltose and glucose, and glucose and pseudotrisaccharide, respectively. No activity with glucose or maltose as substrate. This Geobacillus thermopakistaniensis (strain MAS1) protein is Cyclomaltodextrinase.